The following is a 227-amino-acid chain: 2-C-methyl-D-erythritol 4-phosphate cytidylyltransferase (227 aa).

This sequence belongs to the IspD/TarI cytidylyltransferase family. IspD subfamily.

The catalysed reaction is 2-C-methyl-D-erythritol 4-phosphate + CTP + H(+) = 4-CDP-2-C-methyl-D-erythritol + diphosphate. Its pathway is isoprenoid biosynthesis; isopentenyl diphosphate biosynthesis via DXP pathway; isopentenyl diphosphate from 1-deoxy-D-xylulose 5-phosphate: step 2/6. Functionally, catalyzes the formation of 4-diphosphocytidyl-2-C-methyl-D-erythritol from CTP and 2-C-methyl-D-erythritol 4-phosphate (MEP). This is 2-C-methyl-D-erythritol 4-phosphate cytidylyltransferase from Dehalococcoides mccartyi (strain CBDB1).